The sequence spans 309 residues: 4-hydroxy-3-methylbut-2-enyl diphosphate reductase (309 aa).

A [4Fe-4S] cluster-binding site is contributed by C13. (2E)-4-hydroxy-3-methylbut-2-enyl diphosphate contacts are provided by H42 and H75. H42 and H75 together coordinate dimethylallyl diphosphate. Isopentenyl diphosphate contacts are provided by H42 and H75. C97 lines the [4Fe-4S] cluster pocket. A (2E)-4-hydroxy-3-methylbut-2-enyl diphosphate-binding site is contributed by H125. A dimethylallyl diphosphate-binding site is contributed by H125. Residue H125 coordinates isopentenyl diphosphate. The Proton donor role is filled by E127. (2E)-4-hydroxy-3-methylbut-2-enyl diphosphate is bound at residue T165. [4Fe-4S] cluster is bound at residue C195. S223, S224, N225, and S267 together coordinate (2E)-4-hydroxy-3-methylbut-2-enyl diphosphate. 4 residues coordinate dimethylallyl diphosphate: S223, S224, N225, and S267. Positions 223, 224, 225, and 267 each coordinate isopentenyl diphosphate.

The protein belongs to the IspH family. [4Fe-4S] cluster is required as a cofactor.

It catalyses the reaction isopentenyl diphosphate + 2 oxidized [2Fe-2S]-[ferredoxin] + H2O = (2E)-4-hydroxy-3-methylbut-2-enyl diphosphate + 2 reduced [2Fe-2S]-[ferredoxin] + 2 H(+). It carries out the reaction dimethylallyl diphosphate + 2 oxidized [2Fe-2S]-[ferredoxin] + H2O = (2E)-4-hydroxy-3-methylbut-2-enyl diphosphate + 2 reduced [2Fe-2S]-[ferredoxin] + 2 H(+). It participates in isoprenoid biosynthesis; dimethylallyl diphosphate biosynthesis; dimethylallyl diphosphate from (2E)-4-hydroxy-3-methylbutenyl diphosphate: step 1/1. The protein operates within isoprenoid biosynthesis; isopentenyl diphosphate biosynthesis via DXP pathway; isopentenyl diphosphate from 1-deoxy-D-xylulose 5-phosphate: step 6/6. Its function is as follows. Catalyzes the conversion of 1-hydroxy-2-methyl-2-(E)-butenyl 4-diphosphate (HMBPP) into a mixture of isopentenyl diphosphate (IPP) and dimethylallyl diphosphate (DMAPP). Acts in the terminal step of the DOXP/MEP pathway for isoprenoid precursor biosynthesis. In Chlamydia abortus (strain DSM 27085 / S26/3) (Chlamydophila abortus), this protein is 4-hydroxy-3-methylbut-2-enyl diphosphate reductase.